Reading from the N-terminus, the 86-residue chain is Small muscular protein (86 aa).

The interval 20 to 64 (MGAFRPGAGQPPRKKECTPETEEAVLPTSDEEKKPIPGAKKLPGP) is disordered.

The protein belongs to the SMPX family. High level of expression found in the heart and skeletal muscle, a very low expression in the lung and spleen and no expression found in the liver, kidney, fat and brain.

In terms of biological role, plays a role in the regulatory network through which muscle cells coordinate their structural and functional states during growth, adaptation, and repair. In Sus scrofa (Pig), this protein is Small muscular protein (SMPX).